A 160-amino-acid polypeptide reads, in one-letter code: Serine-protein kinase RsbW (160 aa).

This sequence belongs to the anti-sigma-factor family.

It catalyses the reaction L-seryl-[protein] + ATP = O-phospho-L-seryl-[protein] + ADP + H(+). It carries out the reaction L-threonyl-[protein] + ATP = O-phospho-L-threonyl-[protein] + ADP + H(+). In terms of biological role, negative regulator of sigma-B activity. Phosphorylates and inactivates its specific antagonist protein, RsbV. Upon phosphorylation of RsbV, RsbW is released and binds to sigma-B, thereby blocking its ability to form an RNA polymerase holoenzyme (E-sigma-B). In Bacillus cereus (strain AH187), this protein is Serine-protein kinase RsbW.